We begin with the raw amino-acid sequence, 822 residues long: Nuclear factor of activated T-cells, cytoplasmic 1 (822 aa).

Positions 110 to 115 (PRIEIT) are calcineurin-binding. The segment at 118–210 (LGLHHNNGQF…CVSPKTTDPE (93 aa)) is transactivation domain A (TAD-A). Residues 192–206 (PQTSPWQSPCVSPKT) are compositionally biased toward polar residues. Residues 192–289 (PQTSPWQSPC…HSSPRVSVTD (98 aa)) form a disordered region. 2 repeat units span residues 195-211 (SPWQ…DPEE) and 225-241 (SPRH…VTEE). The tract at residues 195-290 (SPWQSPCVSP…SSPRVSVTDD (96 aa)) is 3 X SP repeats. Phosphoserine is present on residues S225 and S229. Residues 225–242 (SPRHSPSTSPRTSVTEES) are compositionally biased toward low complexity. S237 bears the Phosphoserine; by PKA mark. The Nuclear localization signal signature appears at 257–259 (KRK). Repeat 3 spans residues 274 to 290 (SPTPSPHSSPRVSVTDD). Position 286 is a phosphoserine; by PKA (S286). The Nuclear export signal signature appears at 302-313 (SAIVAAINALST). Residues 400 to 582 (PSLPALDWQL…NPIECSQRSA (183 aa)) enclose the RHD domain. A DNA-binding region spans residues 429-436 (RAHYETEG). Residues 672-674 (KRK) carry the Nuclear localization signal motif. The tract at residues 772–822 (GPGHLGLQRPAGGVLGGQEAPRPGGPHPGAPQLHPLNLSQSIVTRLTEPQP) is disordered. Positions 808–822 (NLSQSIVTRLTEPQP) are enriched in polar residues.

As to quaternary structure, member of the multicomponent NFATC transcription complex that consists of at least two components, a pre-existing cytoplasmic component NFATC2 and an inducible nuclear component NFATC1. Other members such as NFATC4, NFATC3 or members of the activating protein-1 family, MAF, GATA4 and Cbp/p300 can also bind the complex. NFATC proteins bind to DNA as monomers. Interacts with HOMER2 and HOMER3; this interaction may compete with calcineurin/PPP3CA-binding and hence prevent NFATC1 dephosphorylation and activation. Interacts with TLE6/GRG6. Phosphorylated by NFATC-kinase and GSK3B; phosphorylation induces NFATC1 nuclear exit and dephosphorylation by calcineurin promotes nuclear import. Phosphorylation by PKA and DYRK2 negatively modulates nuclear accumulation, and promotes subsequent phosphorylation by GSK3B or casein kinase 1.

The protein localises to the cytoplasm. It is found in the nucleus. Functionally, plays a role in the inducible expression of cytokine genes in T-cells, especially in the induction of the IL-2 or IL-4 gene transcription. Also controls gene expression in embryonic cardiac cells. Could regulate not only the activation and proliferation but also the differentiation and programmed death of T-lymphocytes as well as lymphoid and non-lymphoid cells. Required for osteoclastogenesis and regulates many genes important for osteoclast differentiation and function. The chain is Nuclear factor of activated T-cells, cytoplasmic 1 (NFATC1) from Sus scrofa (Pig).